The primary structure comprises 379 residues: Flagellar P-ring protein (379 aa).

Residues 1 to 32 (MTAPAGFLPRVGRLIAVALTAVFLLAPTGAEA) form the signal peptide.

Belongs to the FlgI family. The basal body constitutes a major portion of the flagellar organelle and consists of four rings (L,P,S, and M) mounted on a central rod.

It is found in the periplasm. Its subcellular location is the bacterial flagellum basal body. Its function is as follows. Assembles around the rod to form the L-ring and probably protects the motor/basal body from shearing forces during rotation. In Rhodospirillum rubrum (strain ATCC 11170 / ATH 1.1.1 / DSM 467 / LMG 4362 / NCIMB 8255 / S1), this protein is Flagellar P-ring protein.